A 429-amino-acid polypeptide reads, in one-letter code: C4-dicarboxylate transport protein (429 aa).

8 consecutive transmembrane segments (helical) span residues 3 to 23 (VSIF…GVLL), 44 to 64 (LIKM…IAGM), 76 to 96 (IALL…LVVV), 144 to 164 (AFAS…GFAL), 184 to 204 (VIFG…FGAM), 222 to 242 (LILC…GTIA), 331 to 351 (TLLV…GSGF), and 352 to 372 (IVLA…LALI).

It belongs to the dicarboxylate/amino acid:cation symporter (DAACS) (TC 2.A.23) family.

Its subcellular location is the cell inner membrane. Responsible for the transport of dicarboxylates such as succinate, fumarate, and malate from the periplasm across the membrane. The protein is C4-dicarboxylate transport protein of Yersinia pseudotuberculosis serotype O:1b (strain IP 31758).